The following is a 159-amino-acid chain: Peptide methionine sulfoxide reductase MsrB (159 aa).

The region spanning 14–137 (TEKLKENLTE…NSASLKFIAK (124 aa)) is the MsrB domain. Cys126 functions as the Nucleophile in the catalytic mechanism.

The protein belongs to the MsrB Met sulfoxide reductase family.

The enzyme catalyses L-methionyl-[protein] + [thioredoxin]-disulfide + H2O = L-methionyl-(R)-S-oxide-[protein] + [thioredoxin]-dithiol. The sequence is that of Peptide methionine sulfoxide reductase MsrB from Hathewaya histolytica (Clostridium histolyticum).